The sequence spans 95 residues: Co-chaperonin GroES (95 aa).

Belongs to the GroES chaperonin family. Heptamer of 7 subunits arranged in a ring. Interacts with the chaperonin GroEL.

The protein resides in the cytoplasm. Its function is as follows. Together with the chaperonin GroEL, plays an essential role in assisting protein folding. The GroEL-GroES system forms a nano-cage that allows encapsulation of the non-native substrate proteins and provides a physical environment optimized to promote and accelerate protein folding. GroES binds to the apical surface of the GroEL ring, thereby capping the opening of the GroEL channel. The protein is Co-chaperonin GroES of Chlorobaculum tepidum (strain ATCC 49652 / DSM 12025 / NBRC 103806 / TLS) (Chlorobium tepidum).